The chain runs to 810 residues: Leucine--tRNA ligase (810 aa).

Positions 43 to 53 (PYPSGTLHIGH) match the 'HIGH' region motif. A 'KMSKS' region motif is present at residues 578–582 (KMSKS). ATP is bound at residue K581.

Belongs to the class-I aminoacyl-tRNA synthetase family.

The protein resides in the cytoplasm. The enzyme catalyses tRNA(Leu) + L-leucine + ATP = L-leucyl-tRNA(Leu) + AMP + diphosphate. The polypeptide is Leucine--tRNA ligase (Solibacter usitatus (strain Ellin6076)).